A 200-amino-acid polypeptide reads, in one-letter code: Holliday junction branch migration complex subunit RuvA (200 aa).

A domain I region spans residues 1–63; the sequence is MIALLTGQIA…EDAILLYGFR (63 aa). The domain II stretch occupies residues 64–142; it reads TRTEKSFFQL…KLDSGSIPAG (79 aa). The tract at residues 143–153 is flexible linker; it reads DAVGRSLPAGS. Residues 153–200 are domain III; the sequence is SVLDDVSSALVNLGYKDPQVRKVLAELDCAGSASVEEVLKQALKILMK.

The protein belongs to the RuvA family. In terms of assembly, homotetramer. Forms an RuvA(8)-RuvB(12)-Holliday junction (HJ) complex. HJ DNA is sandwiched between 2 RuvA tetramers; dsDNA enters through RuvA and exits via RuvB. An RuvB hexamer assembles on each DNA strand where it exits the tetramer. Each RuvB hexamer is contacted by two RuvA subunits (via domain III) on 2 adjacent RuvB subunits; this complex drives branch migration. In the full resolvosome a probable DNA-RuvA(4)-RuvB(12)-RuvC(2) complex forms which resolves the HJ.

It is found in the cytoplasm. In terms of biological role, the RuvA-RuvB-RuvC complex processes Holliday junction (HJ) DNA during genetic recombination and DNA repair, while the RuvA-RuvB complex plays an important role in the rescue of blocked DNA replication forks via replication fork reversal (RFR). RuvA specifically binds to HJ cruciform DNA, conferring on it an open structure. The RuvB hexamer acts as an ATP-dependent pump, pulling dsDNA into and through the RuvAB complex. HJ branch migration allows RuvC to scan DNA until it finds its consensus sequence, where it cleaves and resolves the cruciform DNA. This chain is Holliday junction branch migration complex subunit RuvA, found in Trichlorobacter lovleyi (strain ATCC BAA-1151 / DSM 17278 / SZ) (Geobacter lovleyi).